The primary structure comprises 458 residues: Sugar transporter ERD6-like 10 (458 aa).

The next 12 membrane-spanning stretches (helical) occupy residues 17–37, 66–86, 96–116, 119–139, 150–170, 174–194, 257–277, 292–312, 319–339, 350–370, 393–413, and 419–439; these read ITAC…SYGC, FLNL…VILG, LFCI…WLDL, ISLG…IAEI, ASTL…GTVI, VLAV…YFIP, LVVG…GITY, LGSM…LILV, PLLL…GVSF, FIPV…AIGI, IVAL…NFMF, and GTFY…WMLV.

This sequence belongs to the major facilitator superfamily. Sugar transporter (TC 2.A.1.1) family.

Its subcellular location is the membrane. In terms of biological role, sugar transporter. The polypeptide is Sugar transporter ERD6-like 10 (Arabidopsis thaliana (Mouse-ear cress)).